A 673-amino-acid polypeptide reads, in one-letter code: UvrABC system protein B (673 aa).

Residues 26–183 (EGLEDGLAHQ…RRLAELQYAR (158 aa)) form the Helicase ATP-binding domain. 39–46 (GVTGSGKT) is an ATP binding site. A Beta-hairpin motif is present at residues 92-115 (YYDYYQPEAYVPSSDTFIEKDASV). The 167-residue stretch at 431 to 597 (QVDDLLSEIR…GLNKKVVDIL (167 aa)) folds into the Helicase C-terminal domain. The region spanning 633–668 (QQKIHELEGLMMQHAQNLEFEEAAQVRDQLHQLRQL) is the UVR domain.

The protein belongs to the UvrB family. In terms of assembly, forms a heterotetramer with UvrA during the search for lesions. Interacts with UvrC in an incision complex.

It is found in the cytoplasm. The UvrABC repair system catalyzes the recognition and processing of DNA lesions. A damage recognition complex composed of 2 UvrA and 2 UvrB subunits scans DNA for abnormalities. Upon binding of the UvrA(2)B(2) complex to a putative damaged site, the DNA wraps around one UvrB monomer. DNA wrap is dependent on ATP binding by UvrB and probably causes local melting of the DNA helix, facilitating insertion of UvrB beta-hairpin between the DNA strands. Then UvrB probes one DNA strand for the presence of a lesion. If a lesion is found the UvrA subunits dissociate and the UvrB-DNA preincision complex is formed. This complex is subsequently bound by UvrC and the second UvrB is released. If no lesion is found, the DNA wraps around the other UvrB subunit that will check the other stand for damage. The protein is UvrABC system protein B of Enterobacter sp. (strain 638).